The primary structure comprises 322 residues: Allergen Asp f 4 (322 aa).

Positions 1–20 are cleaved as a signal peptide; sequence MQLKNSMLLLTALAAGSSVA. Over residues 80–105 the composition is skewed to low complexity; it reads AAAAAASTPEPSSSHSDSSSSSGVSA. A disordered region spans residues 80–109; sequence AAAAAASTPEPSSSHSDSSSSSGVSADWTN.

The protein localises to the secreted. This Aspergillus fumigatus (strain ATCC MYA-4609 / CBS 101355 / FGSC A1100 / Af293) (Neosartorya fumigata) protein is Allergen Asp f 4.